A 730-amino-acid chain; its full sequence is Propionyl-CoA carboxylase alpha chain, mitochondrial (730 aa).

The N-terminal 52 residues, 1 to 52 (MAGLWVGGSVLVAAGRRGSRSPRPLMRSVALWTLKHVPQYSRQRLLVSRSLC), are a transit peptide targeting the mitochondrion. A Biotin carboxylation domain is found at 62–509 (TFDKILIANR…NTKFLSDVYP (448 aa)). Lys-65 is modified (N6-acetyllysine; alternate). Lys-65 bears the N6-succinyllysine; alternate mark. N6-succinyllysine is present on Lys-119. Lys-150 is modified (N6-acetyllysine; alternate). Lys-150 is subject to N6-succinyllysine; alternate. Residue Lys-154 is modified to N6-acetyllysine. Lys-177 is an ATP binding site. Positions 181-378 (KLLAKKAKVN…LVQEMIRVAK (198 aa)) constitute an ATP-grasp domain. Lys-188 carries the post-translational modification N6-succinyllysine. Lys-200 carries the post-translational modification N6-acetyllysine; alternate. The residue at position 200 (Lys-200) is an N6-succinyllysine; alternate. ATP contacts are provided by residues 209-270 (AREI…PRHI), Glu-261, and Asn-296. A Phosphoserine modification is found at Ser-252. Position 262 is an N6-succinyllysine (Lys-262). Positions 336, 349, and 351 each coordinate Mg(2+). Glu-336, Glu-349, and Asn-351 together coordinate Mn(2+). Glu-349 is an active-site residue. Lys-407 is subject to N6-succinyllysine. Phe-409 contacts biotin. An N6-succinyllysine mark is found at Lys-502, Lys-513, and Lys-650. In terms of domain architecture, Biotinyl-binding spans 655-730 (KAAEDTSSIL…GEGDLLVELE (76 aa)). At Lys-696 the chain carries N6-biotinyllysine.

In terms of assembly, the holoenzyme is a dodecamer composed of 6 PCCA/alpha subunits and 6 PCCB/beta subunits. Interacts (via the biotin carboxylation domain) with SIRT4. Interacts with SIRT3 and SIRT5. Mg(2+) is required as a cofactor. It depends on Mn(2+) as a cofactor. Requires biotin as cofactor. In terms of processing, acetylated. The biotin cofactor is covalently attached to the C-terminal biotinyl-binding domain and is required for the catalytic activity. Biotinylation is catalyzed by HLCS.

Its subcellular location is the mitochondrion matrix. The enzyme catalyses propanoyl-CoA + hydrogencarbonate + ATP = (S)-methylmalonyl-CoA + ADP + phosphate + H(+). It catalyses the reaction butanoyl-CoA + hydrogencarbonate + ATP = (2S)-ethylmalonyl-CoA + ADP + phosphate + H(+). The protein operates within metabolic intermediate metabolism; propanoyl-CoA degradation; succinyl-CoA from propanoyl-CoA: step 1/3. Its function is as follows. This is one of the 2 subunits of the biotin-dependent propionyl-CoA carboxylase (PCC), a mitochondrial enzyme involved in the catabolism of odd chain fatty acids, branched-chain amino acids isoleucine, threonine, methionine, and valine and other metabolites. Propionyl-CoA carboxylase catalyzes the carboxylation of propionyl-CoA/propanoyl-CoA to D-methylmalonyl-CoA/(S)-methylmalonyl-CoA. Within the holoenzyme, the alpha subunit catalyzes the ATP-dependent carboxylation of the biotin carried by the biotin carboxyl carrier (BCC) domain, while the beta subunit then tranfers the carboxyl group from carboxylated biotin to propionyl-CoA. Propionyl-CoA carboxylase also significantly acts on butyryl-CoA/butanoyl-CoA, which is converted to ethylmalonyl-CoA/(2S)-ethylmalonyl-CoA at a much lower rate. Other alternative minor substrates include (2E)-butenoyl-CoA/crotonoyl-CoA. In Sus scrofa (Pig), this protein is Propionyl-CoA carboxylase alpha chain, mitochondrial.